We begin with the raw amino-acid sequence, 457 residues long: Adenylosuccinate synthetase isozyme 1 (457 aa).

The tract at residues 1–25 (MSGTRASNDRPPSAGGVKRGRLQHE) is disordered. Residues 42–48 (GDEGKGK) and 70–72 (GHT) each bind GTP. D43 functions as the Proton acceptor in the catalytic mechanism. Mg(2+) contacts are provided by D43 and G70. Residue D43 participates in substrate binding. IMP is bound by residues 43 to 46 (DEGK), 68 to 71 (NAGH), T163, R177, N256, T271, and R335. The active-site Proton donor is the H71. Position 331–337 (331–337 (VTTGRKR)) interacts with substrate. GTP contacts are provided by residues R337, 363 to 365 (KLD), and 445 to 448 (GVGK).

Belongs to the adenylosuccinate synthetase family. In terms of assembly, homodimer. It depends on Mg(2+) as a cofactor.

The protein localises to the cytoplasm. It catalyses the reaction IMP + L-aspartate + GTP = N(6)-(1,2-dicarboxyethyl)-AMP + GDP + phosphate + 2 H(+). Its pathway is purine metabolism; AMP biosynthesis via de novo pathway; AMP from IMP: step 1/2. Functionally, component of the purine nucleotide cycle (PNC), which interconverts IMP and AMP to regulate the nucleotide levels in various tissues, and which contributes to glycolysis and ammoniagenesis. Catalyzes the first committed step in the biosynthesis of AMP from IMP. This Bos taurus (Bovine) protein is Adenylosuccinate synthetase isozyme 1.